A 135-amino-acid chain; its full sequence is Race-specific elicitor A4 (135 aa).

Positions 1–18 (MHYTTLLLSTLLVGTALA) are cleaved as a signal peptide. A propeptide spanning residues 19–29 (QPTNPPAKTPK) is cleaved from the precursor. Residues 19-39 (QPTNPPAKTPKKAPKTQPYNP) form a disordered region. The Chitin-binding type-2 domain occupies 47 to 111 (DTKCMGPKDC…DYPNLSTCPV (65 aa)). Cys86 and Cys101 form a disulfide bridge. The tract at residues 112 to 135 (KTPQPKPKKGGVGGKKASVGHPGY) is disordered.

Its function is as follows. This necrosis-inducing peptide induces a hypersensitive response on Cf-4 tomato genotypes. Race-specific elicitors are compounds which only induce defense responses in genotypes of host plants which are resistant to the pathogenic race that produces the elicitor, but not in susceptible genotypes. The chain is Race-specific elicitor A4 (AVR4) from Passalora fulva (Tomato leaf mold).